A 112-amino-acid chain; its full sequence is uncharacterized protein (112 aa).

The interval 90-112 is disordered; it reads KNFNNSKNDQIKKKKIDNNQVNL.

This is an uncharacterized protein from Buchnera aphidicola subsp. Acyrthosiphon pisum (strain APS) (Acyrthosiphon pisum symbiotic bacterium).